A 304-amino-acid polypeptide reads, in one-letter code: Ornithine carbamoyltransferase (304 aa).

Residues 47–50, Arg-98, and 125–128 each bind carbamoyl phosphate; these read STRT and HPCQ. L-ornithine contacts are provided by residues Asn-156, Asp-221, and 225–226; that span reads SM. Residues 262 to 263 and Arg-290 each bind carbamoyl phosphate; that span reads CL.

Belongs to the aspartate/ornithine carbamoyltransferase superfamily. OTCase family.

The protein resides in the cytoplasm. The enzyme catalyses carbamoyl phosphate + L-ornithine = L-citrulline + phosphate + H(+). It functions in the pathway amino-acid biosynthesis; L-arginine biosynthesis; L-arginine from L-ornithine and carbamoyl phosphate: step 1/3. Functionally, reversibly catalyzes the transfer of the carbamoyl group from carbamoyl phosphate (CP) to the N(epsilon) atom of ornithine (ORN) to produce L-citrulline. This is Ornithine carbamoyltransferase from Methanococcus maripaludis (strain C7 / ATCC BAA-1331).